Reading from the N-terminus, the 359-residue chain is MANVLVAMSGGVDSSLAAALLLEAGHQVTGVTMHLWDDDEQGLRESLCCAAEAAASARRVCALLGIPFYVFNYQREFRRHVIDYFIRAYTHGLTPNPCVECNRMIKFRALLDRARTLGFDAVATGHYARIIQGEDGRYQLWRAVDLEKDQSYMLHMLGQAELSRLIFPIGAYTKREVREMAAARGLPSADREESQDICFVPDGDYRNLLRIESPESLVPGPIVDLEGREIGRHRGLPLYTVGQRRGLGLGGGEPRYVVAIDPARNALIVGPAAALNRARFTVIDACWVDDAPPAESFTCLVQVRAHAEPLPARVSQQPDGRWLVELERPQRAVSPGQAAVFYRGQQVLGGGWIARPEVA.

ATP contacts are provided by residues 7-14 (AMSGGVDS) and Met33. The active-site Nucleophile is the Cys101. Cysteines 101 and 198 form a disulfide. Residue Gly125 participates in ATP binding. Residues 148 to 150 (KDQ) are interaction with tRNA. Residue Cys198 is the Cysteine persulfide intermediate of the active site.

It belongs to the MnmA/TRMU family.

Its subcellular location is the cytoplasm. It carries out the reaction S-sulfanyl-L-cysteinyl-[protein] + uridine(34) in tRNA + AH2 + ATP = 2-thiouridine(34) in tRNA + L-cysteinyl-[protein] + A + AMP + diphosphate + H(+). Functionally, catalyzes the 2-thiolation of uridine at the wobble position (U34) of tRNA, leading to the formation of s(2)U34. The protein is tRNA-specific 2-thiouridylase MnmA of Chloroflexus aurantiacus (strain ATCC 29366 / DSM 635 / J-10-fl).